Reading from the N-terminus, the 522-residue chain is Zinc finger protein 329 (522 aa).

Residue S30 is modified to Phosphoserine. C2H2-type zinc fingers lie at residues 184-206, 212-234, 240-262, 268-290, 296-318, 324-346, 352-374, 380-402, 408-430, 436-458, 464-486, and 492-514; these read YKCAECGKCFKRNSSLVLHHRTH, YTCNDCGKSFSKNYNLIVHRRIH, YKCSKCGKAFSDGSALTQHQRIH, YACLDCGKTFNRNSSLILHQRTH, YRCNECGKPFTDISHLTVHLRIH, YECSRCGKAFRDGSYLTQHERTH, FECVECGKSFSRNSHLIVHQKIH, YECKECGKTFIESAYLIRHQRVH, YGCNQCRKLFRNIAGLIRHQRIH, YECNQCGKAFRDSSCLTKHQRIH, YQCLKCGKSFRQNTHLVVHQRLH, and SQCPHCGKIFRRSWCLARHQRTH.

The protein belongs to the krueppel C2H2-type zinc-finger protein family.

The protein localises to the nucleus. Functionally, may be involved in transcriptional regulation. This chain is Zinc finger protein 329 (Znf329), found in Mus musculus (Mouse).